Here is a 135-residue protein sequence, read N- to C-terminus: NADPH-dependent 7-cyano-7-deazaguanine reductase (135 aa).

Cys-48 functions as the Thioimide intermediate in the catalytic mechanism. Asp-55 (proton donor) is an active-site residue. Substrate is bound by residues 70–72 and 89–90; these read IEL and HE.

This sequence belongs to the GTP cyclohydrolase I family. QueF type 1 subfamily.

Its subcellular location is the cytoplasm. It catalyses the reaction 7-aminomethyl-7-carbaguanine + 2 NADP(+) = 7-cyano-7-deazaguanine + 2 NADPH + 3 H(+). Its pathway is tRNA modification; tRNA-queuosine biosynthesis. Its function is as follows. Catalyzes the NADPH-dependent reduction of 7-cyano-7-deazaguanine (preQ0) to 7-aminomethyl-7-deazaguanine (preQ1). The protein is NADPH-dependent 7-cyano-7-deazaguanine reductase of Prochlorococcus marinus (strain MIT 9313).